Consider the following 700-residue polypeptide: Protein kinase C, eye isozyme (700 aa).

2 Phorbol-ester/DAG-type zinc fingers span residues 71 to 121 (GHRF…VFKC) and 136 to 186 (KHGW…PPMC). The C2 domain occupies 189 to 310 (DISEVRGKLL…LQKEPVDGWY (122 aa)). Ca(2+)-binding residues include Asp-222, Asp-228, Asp-281, Asp-283, Ser-286, and Asp-289. One can recognise a Protein kinase domain in the interval 371–629 (FNFVKVIGKG…RQEITTHPFF (259 aa)). Residues 377 to 385 (IGKGSFGKV) and Lys-400 each bind ATP. Asp-495 serves as the catalytic Proton acceptor. An AGC-kinase C-terminal domain is found at 630–700 (RNVDWDKAEA…FMNPEFITII (71 aa)).

This sequence belongs to the protein kinase superfamily. AGC Ser/Thr protein kinase family. PKC subfamily. Ca(2+) is required as a cofactor. As to expression, exclusively expressed in photoreceptor cells.

The catalysed reaction is L-seryl-[protein] + ATP = O-phospho-L-seryl-[protein] + ADP + H(+). It catalyses the reaction L-threonyl-[protein] + ATP = O-phospho-L-threonyl-[protein] + ADP + H(+). Its function is as follows. This is a calcium-activated, phospholipid-dependent, serine- and threonine-specific enzyme. This isozyme is a negative regulator of the visual transduction cascade and has been shown to be required for photoreceptor cell inactivation and light adaptation. Negative regulation is dependent on interaction with scaffolding protein inaD. Acts in a hh-signaling pathway which regulates the Duox-dependent gut immune response to bacterial uracil; required for the activation of Cad99C and consequently Cad99C-dependent endosome formation, which is essential for the Duox-dependent production of reactive oxygen species (ROS) in response to intestinal bacterial infection. This Drosophila melanogaster (Fruit fly) protein is Protein kinase C, eye isozyme (inaC).